The following is a 236-amino-acid chain: Baculoviral IAP repeat-containing protein 8 (236 aa).

Residues 7–70 (RLITFGTWMY…KWYPGCKYLL (64 aa)) form a BIR repeat. Cysteine 39, cysteine 42, histidine 59, and cysteine 66 together coordinate Zn(2+). The segment at 189 to 224 (CKICMDRHIAVVFIPCGHLVTCKQCAEAVDRCPMCS) adopts an RING-type zinc-finger fold.

This sequence belongs to the IAP family. Binds to caspase-9.

It is found in the cytoplasm. Protects against apoptosis mediated by BAX. This is Baculoviral IAP repeat-containing protein 8 (BIRC8) from Pan troglodytes (Chimpanzee).